The following is a 100-amino-acid chain: MIREERLLKVLRAPHVSEKASTAMEKTNTIVLKVAKDATKAEIKAAVQKLFEVEVEVVNTLVVKGKVKRHGQRIGRRSDWKKAYVTLKEGQNLDFVGGAE.

It belongs to the universal ribosomal protein uL23 family. Part of the 50S ribosomal subunit. Contacts protein L29, and trigger factor when it is bound to the ribosome.

One of the early assembly proteins it binds 23S rRNA. One of the proteins that surrounds the polypeptide exit tunnel on the outside of the ribosome. Forms the main docking site for trigger factor binding to the ribosome. This is Large ribosomal subunit protein uL23 from Salmonella paratyphi A (strain ATCC 9150 / SARB42).